The chain runs to 183 residues: Probable chemoreceptor glutamine deamidase CheD (183 aa).

The protein belongs to the CheD family.

The enzyme catalyses L-glutaminyl-[protein] + H2O = L-glutamyl-[protein] + NH4(+). Its function is as follows. Probably deamidates glutamine residues to glutamate on methyl-accepting chemotaxis receptors (MCPs), playing an important role in chemotaxis. The chain is Probable chemoreceptor glutamine deamidase CheD from Zymomonas mobilis subsp. mobilis (strain ATCC 31821 / ZM4 / CP4).